We begin with the raw amino-acid sequence, 701 residues long: Sulfate anion transporter 1 (701 aa).

The segment at 1 to 20 is disordered; sequence MDESPEPLQQGRGPVPVRRQ. 2 helical membrane-spanning segments follow: residues 68-90 and 94-116; these read YLAG…AIAY and AGLQ…FLMG. N-linked (GlcNAc...) asparagine glycosylation is found at asparagine 158 and asparagine 163. 7 helical membrane passes run 176 to 198, 255 to 277, 290 to 309, 342 to 364, 377 to 399, 412 to 434, and 472 to 494; these read YAIR…MGVL, GAGQ…LLAA, VPLP…SHFG, ALDA…EMFA, LLAV…SAAL, TQLS…APLF, and LVWA…LAGV. Residues 527 to 687 form the STAS domain; sequence EFEGLVPEPG…LSVHDAVQTA (161 aa).

Belongs to the SLC26A/SulP transporter (TC 2.A.53) family. Expressed most abundantly in the kidney and liver, with lower levels in the pancreas, testis, brain, small intestine, colon, and lung.

The protein localises to the cell membrane. It localises to the basolateral cell membrane. The enzyme catalyses thiosulfate(in) + sulfate(out) = thiosulfate(out) + sulfate(in). It carries out the reaction 2 hydrogencarbonate(out) + sulfate(in) = 2 hydrogencarbonate(in) + sulfate(out). It catalyses the reaction oxalate(in) + sulfate(out) = oxalate(out) + sulfate(in). The catalysed reaction is oxalate(in) + 2 hydrogencarbonate(out) = oxalate(out) + 2 hydrogencarbonate(in). Functionally, sodium-independent sulfate anion transporter. Can transport other anions including bicarbonate, thiosulfate and oxalate by mediating sulfate-thiosulfate, sulfate-hydrogencarbonate and sulfate-oxalate anion exchange. Mediates oxalate-hydrogencarbonate anion exchange. This chain is Sulfate anion transporter 1 (SLC26A1), found in Homo sapiens (Human).